A 258-amino-acid polypeptide reads, in one-letter code: Methylthioribulose-1-phosphate dehydratase (258 aa).

A disordered region spans residues 1–21; that stretch reads MCSPTTENNNNNNDHLVQSSD. Residue Cys-105 coordinates substrate. Zn(2+) contacts are provided by His-123 and His-125. The active-site Proton donor/acceptor is Glu-153. His-210 contributes to the Zn(2+) binding site.

Belongs to the aldolase class II family. MtnB subfamily. Requires Zn(2+) as cofactor.

The protein resides in the cytoplasm. It catalyses the reaction 5-(methylsulfanyl)-D-ribulose 1-phosphate = 5-methylsulfanyl-2,3-dioxopentyl phosphate + H2O. Its pathway is amino-acid biosynthesis; L-methionine biosynthesis via salvage pathway; L-methionine from S-methyl-5-thio-alpha-D-ribose 1-phosphate: step 2/6. Functionally, catalyzes the dehydration of methylthioribulose-1-phosphate (MTRu-1-P) into 2,3-diketo-5-methylthiopentyl-1-phosphate (DK-MTP-1-P). The chain is Methylthioribulose-1-phosphate dehydratase from Neurospora crassa (strain ATCC 24698 / 74-OR23-1A / CBS 708.71 / DSM 1257 / FGSC 987).